A 65-amino-acid chain; its full sequence is Orally active insecticidal peptide-3 (65 aa).

An N-terminal signal peptide occupies residues 1 to 21; sequence MKTSVLFAILGLALLFCLSFG. The propeptide occupies 22-29; sequence VELEETGR. Intrachain disulfides connect Cys-31-Cys-46, Cys-38-Cys-51, and Cys-45-Cys-58. Pro-62 carries the proline amide modification.

It belongs to the neurotoxin 10 (Hwtx-1) family. 46 (Jztx-7/10/12) subfamily. As to expression, expressed by the venom gland.

The protein resides in the secreted. Probable ion channel inhibitor. Shows insecticidal activity when injected into mealworms. In Selenotypus plumipes (Australian featherleg tarantula), this protein is Orally active insecticidal peptide-3.